A 110-amino-acid polypeptide reads, in one-letter code: UPF0060 membrane protein Pfl01_4105 (110 aa).

Transmembrane regions (helical) follow at residues 5 to 25 (LWFF…WMWL), 28 to 48 (GKSA…ALLL), 59 to 79 (AYAA…AVVE), and 84 to 104 (LGSD…ILFG).

Belongs to the UPF0060 family.

It is found in the cell inner membrane. The protein is UPF0060 membrane protein Pfl01_4105 of Pseudomonas fluorescens (strain Pf0-1).